A 204-amino-acid polypeptide reads, in one-letter code: Translation initiation factor IF-3 (204 aa).

Positions 169–204 are disordered; that stretch reads VPKAAPKRDSGRSESAQEAPTARSAEASRPEAPANA.

It belongs to the IF-3 family. Monomer.

It is found in the cytoplasm. In terms of biological role, IF-3 binds to the 30S ribosomal subunit and shifts the equilibrium between 70S ribosomes and their 50S and 30S subunits in favor of the free subunits, thus enhancing the availability of 30S subunits on which protein synthesis initiation begins. The protein is Translation initiation factor IF-3 of Deinococcus geothermalis (strain DSM 11300 / CIP 105573 / AG-3a).